The following is a 137-amino-acid chain: Aspartate 1-decarboxylase (137 aa).

Serine 25 acts as the Schiff-base intermediate with substrate; via pyruvic acid in catalysis. Residue serine 25 is modified to Pyruvic acid (Ser). Threonine 57 is a binding site for substrate. The Proton donor role is filled by tyrosine 58. Residue 73 to 75 participates in substrate binding; the sequence is GAA.

The protein belongs to the PanD family. Heterooctamer of four alpha and four beta subunits. Requires pyruvate as cofactor. In terms of processing, is synthesized initially as an inactive proenzyme, which is activated by self-cleavage at a specific serine bond to produce a beta-subunit with a hydroxyl group at its C-terminus and an alpha-subunit with a pyruvoyl group at its N-terminus.

It is found in the cytoplasm. The catalysed reaction is L-aspartate + H(+) = beta-alanine + CO2. Its pathway is cofactor biosynthesis; (R)-pantothenate biosynthesis; beta-alanine from L-aspartate: step 1/1. Functionally, catalyzes the pyruvoyl-dependent decarboxylation of aspartate to produce beta-alanine. This Thermobifida fusca (strain YX) protein is Aspartate 1-decarboxylase.